Consider the following 363-residue polypeptide: NAD(P)H-quinone oxidoreductase subunit 1, chloroplastic (363 aa).

The next 6 helical transmembrane spans lie at 27-47, 98-118, 127-147, 248-268, 300-320, and 336-356; these read IWLLVPIFTPVSGITIGVLVI, FSIGPSIAIISILLSYSVIPF, LSIGVFLWIAISSIAPIGLLM, YSGIKFGLFYVASYLNLLVSS, VFGTTIGIFITLAKAYLFLFI, and LLNLGWKFLLPISLGNLLLTT.

This sequence belongs to the complex I subunit 1 family. In terms of assembly, NDH is composed of at least 16 different subunits, 5 of which are encoded in the nucleus.

It localises to the plastid. The protein resides in the chloroplast thylakoid membrane. It catalyses the reaction a plastoquinone + NADH + (n+1) H(+)(in) = a plastoquinol + NAD(+) + n H(+)(out). The enzyme catalyses a plastoquinone + NADPH + (n+1) H(+)(in) = a plastoquinol + NADP(+) + n H(+)(out). Functionally, NDH shuttles electrons from NAD(P)H:plastoquinone, via FMN and iron-sulfur (Fe-S) centers, to quinones in the photosynthetic chain and possibly in a chloroplast respiratory chain. The immediate electron acceptor for the enzyme in this species is believed to be plastoquinone. Couples the redox reaction to proton translocation, and thus conserves the redox energy in a proton gradient. In Platanus occidentalis (Sycamore), this protein is NAD(P)H-quinone oxidoreductase subunit 1, chloroplastic.